A 666-amino-acid chain; its full sequence is DEAD-box ATP-dependent RNA helicase 30 (666 aa).

Residues 53-102 (PDPNLPRRLPFPSSSSTPTAAAPPDSGEPSRARARTETYRTGDMNPYDLR) are disordered. The span at 64 to 76 (PSSSSTPTAAAPP) shows a compositional bias: low complexity. Over residues 80–92 (EPSRARARTETYR) the composition is skewed to basic and acidic residues. The Q motif motif lies at 251–279 (RYFQEANFPDYCMQAIAKSGFVEPTPIQS). A Helicase ATP-binding domain is found at 282 to 457 (WPMALKGRDM…RQFLQNPYKV (176 aa)). Residue 295–302 (AQTGSGKT) coordinates ATP. The short motif at 405–408 (DEAD) is the DEAD box element. The region spanning 485–630 (RLSKLLSDLM…VVNPALESMA (146 aa)) is the Helicase C-terminal domain. Positions 632–666 (SASSMGGGNFRSRGRGGFGNRSGSNSIPIRGRRPY) are disordered. Positions 636 to 651 (MGGGNFRSRGRGGFGN) are enriched in gly residues.

The protein belongs to the DEAD box helicase family. DDX5/DBP2 subfamily.

It localises to the nucleus. It catalyses the reaction ATP + H2O = ADP + phosphate + H(+). In terms of biological role, ATP-dependent RNA helicase involved nonsense-mediated mRNA decay and ribosome biogenesis through rRNA processing. The chain is DEAD-box ATP-dependent RNA helicase 30 from Oryza sativa subsp. japonica (Rice).